The chain runs to 263 residues: Small ribosomal subunit protein uS2 (263 aa).

Belongs to the universal ribosomal protein uS2 family.

The polypeptide is Small ribosomal subunit protein uS2 (Hyphomonas neptunium (strain ATCC 15444)).